The sequence spans 266 residues: Putative zinc finger protein 034R (266 aa).

The interval 84–176 (SPTKSVDKAA…GPKRDSTQQP (93 aa)) is disordered. A compositionally biased stretch (basic and acidic residues) spans 88–100 (SVDKAAQKEKKMP). 2 stretches are compositionally biased toward polar residues: residues 105–119 (KPTT…QGIL) and 160–176 (GVSQ…TQQP). The C3H1-type zinc finger occupies 180–192 (CKSVLKQAKCYFG).

Belongs to the IIV-6 077L family.

This Aedes vexans (Inland floodwater mosquito) protein is Putative zinc finger protein 034R.